A 257-amino-acid chain; its full sequence is tRNA (guanine-N(1)-)-methyltransferase (257 aa).

S-adenosyl-L-methionine-binding positions include Gly-112 and 136 to 141 (LGDYVL).

Belongs to the RNA methyltransferase TrmD family. As to quaternary structure, homodimer.

It is found in the cytoplasm. It catalyses the reaction guanosine(37) in tRNA + S-adenosyl-L-methionine = N(1)-methylguanosine(37) in tRNA + S-adenosyl-L-homocysteine + H(+). Its function is as follows. Specifically methylates guanosine-37 in various tRNAs. This Salinispora arenicola (strain CNS-205) protein is tRNA (guanine-N(1)-)-methyltransferase.